Reading from the N-terminus, the 581-residue chain is Arginine--tRNA ligase (581 aa).

The short motif at 126–136 (PNLAKEMHVGH) is the 'HIGH' region element.

The protein belongs to the class-I aminoacyl-tRNA synthetase family. Monomer.

The protein resides in the cytoplasm. It catalyses the reaction tRNA(Arg) + L-arginine + ATP = L-arginyl-tRNA(Arg) + AMP + diphosphate. In Shewanella baltica (strain OS155 / ATCC BAA-1091), this protein is Arginine--tRNA ligase.